The chain runs to 27 residues: Pregnancy-associated glycoprotein 59 (27 aa).

It belongs to the peptidase A1 family. Glycosylated. As to expression, placenta.

The protein is Pregnancy-associated glycoprotein 59 (PAG59) of Capra hircus (Goat).